Reading from the N-terminus, the 288-residue chain is MAFRQALQLAACGLAGGSAAVLFSAVAVGKPRGGGDADTRATEPPAWTGARAGRGVWDTNWDRREPLSLINLKKRNVESGEDELTSRLDHYKAKATRHIFLIRHSQYHVDGSLEKDRTLTPLGREQAELTGLRLASLGLKFNKIVHSSMTRAVETTDIISKHLPGVSRVSTDLLREGAPIEPDPPVSHWKPEAVQYYEDGARIEAAFRNYIHRADARQEEDSYEIFICHANVIRYIVCRALQFPPEGWLRLSLNNGSITHLVIRPNGRVALRTLGDTGFMPPDKITRS.

The Mitochondrial matrix portion of the chain corresponds to Met1–Ala6. The helical transmembrane segment at Leu7–Gly29 threads the bilayer. Residues Lys30–Ser288 lie on the Mitochondrial intermembrane side of the membrane. The interval Asn76 to Glu81 is interaction with KEAP1. 2 positions are modified to phosphoserine: Ser79 and Ser86. Lys115, Lys143, and Lys190 each carry N6-acetyllysine.

It belongs to the phosphoglycerate mutase family. BPG-dependent PGAM subfamily. In terms of assembly, dimer. Forms a ternary complex with NFE2L2 and KEAP1. Interacts with BCL2L1 and MAP3K5. Upon TNF-induced necrosis, forms in complex with RIPK1, RIPK3 and MLKL; the formation of this complex leads to PGAM5 phosphorylation. Isoform 2, but not isoform 1, interacts with DNM1L; this interaction leads to DNM1L dephosphorylation and activation and eventually to mitochondria fragmentation. Phosphorylated by the RIPK1/RIPK3 complex under necrotic conditions. This phosphorylation increases PGAM5 phosphatase activity. In terms of processing, proteolytically cleaved by PARL in response to loss of mitochondrial membrane potential.

The protein resides in the mitochondrion outer membrane. Its subcellular location is the mitochondrion inner membrane. The enzyme catalyses O-phospho-L-seryl-[protein] + H2O = L-seryl-[protein] + phosphate. It catalyses the reaction O-phospho-L-threonyl-[protein] + H2O = L-threonyl-[protein] + phosphate. Its function is as follows. Mitochondrial serine/threonine phosphatase that dephosphorylates various substrates and thus plays a role in different biological processes including cellular senescence or mitophagy. Modulates cellular senescence by regulating mitochondrial dynamics. Mechanistically, participates in mitochondrial fission through dephosphorylating DNM1L/DRP1. Additionally, dephosphorylates MFN2 in a stress-sensitive manner and consequently protects it from ubiquitination and degradation to promote mitochondrial network formation. Regulates mitophagy independent of PARKIN by interacting with and dephosphorylating FUNDC1, which interacts with LC3. Regulates anti-oxidative response by forming a tertiary complex with KEAP1 and NRF2. Regulates necroptosis by acting as a RIPK3 target and recruiting the RIPK1-RIPK3-MLKL necrosis 'attack' complex to mitochondria. The protein is Serine/threonine-protein phosphatase PGAM5, mitochondrial (Pgam5) of Mus musculus (Mouse).